Here is a 426-residue protein sequence, read N- to C-terminus: Protein sum2 (426 aa).

Positions 1 to 80 constitute a Sm domain; the sequence is MTEFIGSRIS…VKDLRIEEPA (80 aa). Disordered stretches follow at residues 79–100, 204–305, and 348–426; these read PATT…IGSN, GMPS…AKPR, and SCES…ANDQ. Residues 84-93 show a composition bias toward pro residues; the sequence is SAPPVQPPND. Polar residues predominate over residues 226 to 237; that stretch reads VSASPSLQSMPP. Residues 261-278 show a composition bias toward low complexity; that stretch reads RNSTVTNDRVVNTTVDVS. The segment covering 279–298 has biased composition (polar residues); it reads QSQTVETSGPSKEVPTTQPD. Residues 296–332 enclose the DFDF domain; the sequence is QPDASAAKPRTEFDFQTANQKFQSMKDDLLKGKNDEE. The FFD box motif lies at 335–351; sequence EFYKPKQSFFDNISCES. The segment covering 350-371 has biased composition (basic and acidic residues); the sequence is ESKEKGMEAADRRALRDRERSL. The short motif at 360-380 is the TFG box element; that stretch reads DRRALRDRERSLNMETFGVAG. Over residues 384–401 the composition is skewed to basic residues; it reads RGRRGRGRGRGGRGRGRG. A compositionally biased stretch (polar residues) spans 405–426; it reads NQYNQYRNSNGSQPRAQPANDQ.

Required for G2/M phase checkpoint control. The chain is Protein sum2 (sum2) from Schizosaccharomyces pombe (strain 972 / ATCC 24843) (Fission yeast).